An 89-amino-acid polypeptide reads, in one-letter code: MNFKPLGQRVLVERLEEDTKTASGIIIPDNAKEKPLMGTVKALSEEVAKEGLLKAGSQVVFAKYSGTDVKLEGKEYLILKVEDLLGTIE.

This sequence belongs to the GroES chaperonin family. As to quaternary structure, heptamer of 7 subunits arranged in a ring. Interacts with the chaperonin GroEL.

The protein localises to the cytoplasm. Together with the chaperonin GroEL, plays an essential role in assisting protein folding. The GroEL-GroES system forms a nano-cage that allows encapsulation of the non-native substrate proteins and provides a physical environment optimized to promote and accelerate protein folding. GroES binds to the apical surface of the GroEL ring, thereby capping the opening of the GroEL channel. This is Co-chaperonin GroES from Wolinella succinogenes (strain ATCC 29543 / DSM 1740 / CCUG 13145 / JCM 31913 / LMG 7466 / NCTC 11488 / FDC 602W) (Vibrio succinogenes).